Reading from the N-terminus, the 342-residue chain is Dihydroorotase (342 aa).

Histidine 13 and histidine 15 together coordinate Zn(2+). Substrate is bound by residues 15–17 and asparagine 41; that span reads HLR. Zn(2+) contacts are provided by lysine 97, histidine 134, and histidine 172. An N6-carboxylysine modification is found at lysine 97. A substrate-binding site is contributed by histidine 134. Leucine 217 lines the substrate pocket. Aspartate 245 is a Zn(2+) binding site. Aspartate 245 is a catalytic residue. Substrate-binding residues include histidine 249 and alanine 261.

The protein belongs to the metallo-dependent hydrolases superfamily. DHOase family. Class II DHOase subfamily. As to quaternary structure, homodimer. Zn(2+) is required as a cofactor.

It catalyses the reaction (S)-dihydroorotate + H2O = N-carbamoyl-L-aspartate + H(+). It functions in the pathway pyrimidine metabolism; UMP biosynthesis via de novo pathway; (S)-dihydroorotate from bicarbonate: step 3/3. Functionally, catalyzes the reversible cyclization of carbamoyl aspartate to dihydroorotate. The sequence is that of Dihydroorotase from Shewanella amazonensis (strain ATCC BAA-1098 / SB2B).